The following is a 350-amino-acid chain: tRNA uridine(34) hydroxylase (350 aa).

Positions 146-240 (DDPDALFIDM…YARKARDQGL (95 aa)) constitute a Rhodanese domain. C200 functions as the Cysteine persulfide intermediate in the catalytic mechanism.

The protein belongs to the TrhO family.

The catalysed reaction is uridine(34) in tRNA + AH2 + O2 = 5-hydroxyuridine(34) in tRNA + A + H2O. Functionally, catalyzes oxygen-dependent 5-hydroxyuridine (ho5U) modification at position 34 in tRNAs, the first step in 5-carboxymethoxyuridine (cmo5U) biosynthesis. May be part of an alternate pathway, which is able to bypass cmo5U biogenesis in a subset of tRNAs under aerobic conditions. The polypeptide is tRNA uridine(34) hydroxylase (Escherichia coli O6:K15:H31 (strain 536 / UPEC)).